Consider the following 285-residue polypeptide: Putative pyruvate, phosphate dikinase regulatory protein (285 aa).

ADP is bound at residue 165–172 (GVSRTSKT).

It belongs to the pyruvate, phosphate/water dikinase regulatory protein family. PDRP subfamily.

It carries out the reaction N(tele)-phospho-L-histidyl/L-threonyl-[pyruvate, phosphate dikinase] + ADP = N(tele)-phospho-L-histidyl/O-phospho-L-threonyl-[pyruvate, phosphate dikinase] + AMP + H(+). The catalysed reaction is N(tele)-phospho-L-histidyl/O-phospho-L-threonyl-[pyruvate, phosphate dikinase] + phosphate + H(+) = N(tele)-phospho-L-histidyl/L-threonyl-[pyruvate, phosphate dikinase] + diphosphate. Its function is as follows. Bifunctional serine/threonine kinase and phosphorylase involved in the regulation of the pyruvate, phosphate dikinase (PPDK) by catalyzing its phosphorylation/dephosphorylation. This Lactobacillus delbrueckii subsp. bulgaricus (strain ATCC 11842 / DSM 20081 / BCRC 10696 / JCM 1002 / NBRC 13953 / NCIMB 11778 / NCTC 12712 / WDCM 00102 / Lb 14) protein is Putative pyruvate, phosphate dikinase regulatory protein.